We begin with the raw amino-acid sequence, 497 residues long: Virion host shutoff protein (497 aa).

2 disordered regions span residues 122–142 (EHDT…PPQD) and 280–373 (SVIS…SAEA). Residues 309-326 (PNERRVISWRRQDDHDYD) are compositionally biased toward basic and acidic residues. Acidic residues predominate over residues 327-344 (SSTEDSDQSDSSEEEEEC).

This sequence belongs to the herpesviridae VHS protein family.

The protein localises to the virion. Its function is as follows. Minor structural protein that acts as an endoribonuclease during lytic infection. Degrades host mRNAs in the cytoplasm by cutting them at preferred sites, including some in regions of translation initiation. This chain is Virion host shutoff protein, found in Equine herpesvirus 1 (strain Ab4p) (EHV-1).